The primary structure comprises 246 residues: uncharacterized protein (246 aa).

It belongs to the BtpA family.

This is an uncharacterized protein from Archaeoglobus fulgidus (strain ATCC 49558 / DSM 4304 / JCM 9628 / NBRC 100126 / VC-16).